Reading from the N-terminus, the 466-residue chain is Keratin, type II cytoskeletal 7 (466 aa).

Position 2 is an N-acetylserine (Ser2). Residues Ser2 and Ser7 each carry the phosphoserine modification. The tract at residues 2 to 91 (SLHFGSQVFS…DPSIQQVRQE (90 aa)) is head. Ser12 is a glycosylation site (O-linked (GlcNAc) serine). Position 20 is a dimethylated arginine; alternate (Arg20). Position 20 is an omega-N-methylarginine; alternate (Arg20). Phosphoserine is present on residues Ser54, Ser72, and Ser84. A coil 1A region spans residues 91 to 127 (EEREQIKTLNNKFASFIDKVRFLEQQNKLLETKWALL). Residues 92–404 (EREQIKTLNN…KLLEGEESRL (313 aa)) enclose the IF rod domain. Thr98 carries the post-translational modification Phosphothreonine. Residues 128–145 (QEQKSAKSNRLPGIFEAQ) form a linker 1 region. A Glycyl lysine isopeptide (Lys-Gly) (interchain with G-Cter in SUMO2) cross-link involves residue Lys131. The interval 146 to 237 (IAGLRKQLEA…TLYEQELKEL (92 aa)) is coil 1B. Position 180 is an N6-acetyllysine (Lys180). Residues 238–261 (QSEVSDTSVVLSMDNNRSLDLDSI) form a linker 12 region. The residue at position 255 (Ser255) is a Phosphoserine. The segment at 262-400 (IAEVKAQYEE…ATYRKLLEGE (139 aa)) is coil 2. Glycyl lysine isopeptide (Lys-Gly) (interchain with G-Cter in SUMO2) cross-links involve residues Lys266 and Lys287. Thr290 carries the post-translational modification Phosphothreonine. Residues Lys297 and Lys332 each participate in a glycyl lysine isopeptide (Lys-Gly) (interchain with G-Cter in SUMO2) cross-link. The tract at residues 401-466 (ESRLTGDGVG…TSATSRSPRK (66 aa)) is tail.

It belongs to the intermediate filament family. Heterotetramer of two type I and two type II keratins. Interacts with eukaryotic translation initiator factor 3 (eIF3) subunit EIF3S10. Interacts with GPER1. In terms of processing, arg-20 is dimethylated, probably to asymmetric dimethylarginine.

Blocks interferon-dependent interphase and stimulates DNA synthesis in cells. This chain is Keratin, type II cytoskeletal 7, found in Bos taurus (Bovine).